Consider the following 115-residue polypeptide: Large ribosomal subunit protein bL20c (115 aa).

The protein belongs to the bacterial ribosomal protein bL20 family.

The protein localises to the plastid. Its subcellular location is the chloroplast. Functionally, binds directly to 23S ribosomal RNA and is necessary for the in vitro assembly process of the 50S ribosomal subunit. It is not involved in the protein synthesizing functions of that subunit. This chain is Large ribosomal subunit protein bL20c, found in Physcomitrium patens (Spreading-leaved earth moss).